A 461-amino-acid polypeptide reads, in one-letter code: Deoxyguanosinetriphosphate triphosphohydrolase-like protein (461 aa).

The tract at residues 22 to 41 (ERFLPDPPREKDNRPPFRRD) is disordered. Positions 24–41 (FLPDPPREKDNRPPFRRD) are enriched in basic and acidic residues. The HD domain occupies 72-285 (RLTHSLEVAQ…MELADDIAYG (214 aa)).

This sequence belongs to the dGTPase family. Type 2 subfamily.

This chain is Deoxyguanosinetriphosphate triphosphohydrolase-like protein, found in Haemophilus influenzae (strain PittGG).